A 257-amino-acid polypeptide reads, in one-letter code: MSGLRLDGKIAIITGGASGIGAEAVRLFTDHGAKVVIVDFQEELGQNVAVSVGKDKASFYRCDVTNEKEVENAVKFTVEKYGKLDVLFSNAGVMEQPGSFLDLNLEQFDRTMAVNVRGAAAFIKHAARAMVEKGTRGSIVCTTSVASEIGGPGPHAYTASKHALLGLVKSACGGLGKYGIRVNGVAPYAVATAINSRDEETVRMVEEYSAATGILKGVVLKARHVAEAALFLASDDSAYVSGQNLAVDGGYSVVKPI.

Residue 12–36 (IITGGASGIGAEAVRLFTDHGAKVV) coordinates NAD(+). S144 lines the substrate pocket. The active-site Proton acceptor is Y157.

It belongs to the short-chain dehydrogenases/reductases (SDR) family. Highly expressed in the radicle tip, lateral root primordia and tips, and the area surrounding the cotyledon hydathode of young seedlings.

Confers resistance to the incompatible pathogenic bacteria P.syringae pv. tomato DC3000 in a PR1-dependent manner. Seems not involved in abscisic acid (ABA) biosynthesis. The protein is Short-chain dehydrogenase reductase 3a (SDR3a) of Arabidopsis thaliana (Mouse-ear cress).